We begin with the raw amino-acid sequence, 456 residues long: tRNA modification GTPase MnmE (456 aa).

Positions 24, 81, and 120 each coordinate (6S)-5-formyl-5,6,7,8-tetrahydrofolate. The TrmE-type G domain occupies 216 to 379 (GMTVVIAGRP…LRDHLKACMG (164 aa)). Asparagine 226 is a binding site for K(+). Residues 226 to 231 (NAGKSS), 245 to 251 (TDIAGTT), 270 to 273 (DTAG), 335 to 338 (NKAD), and 359 to 361 (SAR) contribute to the GTP site. Residue serine 230 coordinates Mg(2+). K(+) is bound by residues threonine 245, isoleucine 247, and threonine 250. Threonine 251 contacts Mg(2+). Residue lysine 456 participates in (6S)-5-formyl-5,6,7,8-tetrahydrofolate binding.

This sequence belongs to the TRAFAC class TrmE-Era-EngA-EngB-Septin-like GTPase superfamily. TrmE GTPase family. As to quaternary structure, homodimer. Heterotetramer of two MnmE and two MnmG subunits. The cofactor is K(+).

The protein localises to the cytoplasm. Exhibits a very high intrinsic GTPase hydrolysis rate. Involved in the addition of a carboxymethylaminomethyl (cmnm) group at the wobble position (U34) of certain tRNAs, forming tRNA-cmnm(5)s(2)U34. This Pseudomonas entomophila (strain L48) protein is tRNA modification GTPase MnmE.